The sequence spans 351 residues: Glycerol-3-phosphate dehydrogenase [NAD(P)+] (351 aa).

The NADPH site is built by serine 12, tryptophan 13, histidine 33, and lysine 114. Lysine 114, glycine 145, and serine 147 together coordinate sn-glycerol 3-phosphate. Alanine 149 lines the NADPH pocket. Residues lysine 200, aspartate 253, serine 263, arginine 264, and asparagine 265 each contribute to the sn-glycerol 3-phosphate site. Lysine 200 functions as the Proton acceptor in the catalytic mechanism. Arginine 264 lines the NADPH pocket. 2 residues coordinate NADPH: valine 288 and glutamate 290.

It belongs to the NAD-dependent glycerol-3-phosphate dehydrogenase family.

The protein localises to the cytoplasm. It carries out the reaction sn-glycerol 3-phosphate + NAD(+) = dihydroxyacetone phosphate + NADH + H(+). The catalysed reaction is sn-glycerol 3-phosphate + NADP(+) = dihydroxyacetone phosphate + NADPH + H(+). Its pathway is membrane lipid metabolism; glycerophospholipid metabolism. Functionally, catalyzes the reduction of the glycolytic intermediate dihydroxyacetone phosphate (DHAP) to sn-glycerol 3-phosphate (G3P), the key precursor for phospholipid synthesis. This chain is Glycerol-3-phosphate dehydrogenase [NAD(P)+], found in Lacticaseibacillus paracasei (strain ATCC 334 / BCRC 17002 / CCUG 31169 / CIP 107868 / KCTC 3260 / NRRL B-441) (Lactobacillus paracasei).